A 402-amino-acid polypeptide reads, in one-letter code: MKNIVLLIMDGLGDNPNPEFFGKTALQAAYRPNLNALCRKSICGLMDPVGPGIRSGSDTSHLSILGYSPERYYNGRGPFEALGLGMELYPGDVAFRANYAYVSDGYVLDRRAGRIRDTCELSRAVSMEIEDVKITVKSGTEHRAAIVMHGPGLSSMVSDSDPHRENERPMEVRPLDKKAEKTARILNEFIKKSREILNKHPVNIKRMNQGLMPANEILIRGAGMVPDLEDFYDRYHLKAACISGTPLIKGICRLAGMDIINMDNLTGRVDENYSGIFEKAHELAKKYDFIIINIKGTDIAGHDRRPDIKRSVIENVDSAISKIINDLDDLLIIVTGDHSTPCNLGDHSGDPVPIMFSSNNIRSDNVMLFDETSVRNGSLRIRGLDVMKIALSLSNRSEKYGA.

The segment at 155 to 174 (SMVSDSDPHRENERPMEVRP) is disordered. The span at 160–174 (SDPHRENERPMEVRP) shows a compositional bias: basic and acidic residues.

The protein belongs to the BPG-independent phosphoglycerate mutase family. A-PGAM subfamily.

The enzyme catalyses (2R)-2-phosphoglycerate = (2R)-3-phosphoglycerate. It participates in carbohydrate degradation; glycolysis; pyruvate from D-glyceraldehyde 3-phosphate: step 3/5. Its function is as follows. Catalyzes the interconversion of 2-phosphoglycerate and 3-phosphoglycerate. This chain is 2,3-bisphosphoglycerate-independent phosphoglycerate mutase, found in Picrophilus torridus (strain ATCC 700027 / DSM 9790 / JCM 10055 / NBRC 100828 / KAW 2/3).